A 313-amino-acid chain; its full sequence is Ribosomal RNA small subunit methyltransferase H (313 aa).

Residues 35-37 (GGH), Asp55, Phe81, Asp103, and Gln110 contribute to the S-adenosyl-L-methionine site.

It belongs to the methyltransferase superfamily. RsmH family.

It is found in the cytoplasm. It catalyses the reaction cytidine(1402) in 16S rRNA + S-adenosyl-L-methionine = N(4)-methylcytidine(1402) in 16S rRNA + S-adenosyl-L-homocysteine + H(+). Its function is as follows. Specifically methylates the N4 position of cytidine in position 1402 (C1402) of 16S rRNA. The polypeptide is Ribosomal RNA small subunit methyltransferase H (Pseudomonas syringae pv. tomato (strain ATCC BAA-871 / DC3000)).